Consider the following 159-residue polypeptide: ATP synthase subunit b' (159 aa).

The helical transmembrane segment at 27-47 (ATLPLMAVQFLILTVILNALL) threads the bilayer.

The protein belongs to the ATPase B chain family. F-type ATPases have 2 components, F(1) - the catalytic core - and F(0) - the membrane proton channel. F(1) has five subunits: alpha(3), beta(3), gamma(1), delta(1), epsilon(1). F(0) has four main subunits: a(1), b(1), b'(1) and c(10-14). The alpha and beta chains form an alternating ring which encloses part of the gamma chain. F(1) is attached to F(0) by a central stalk formed by the gamma and epsilon chains, while a peripheral stalk is formed by the delta, b and b' chains.

The protein localises to the cellular thylakoid membrane. In terms of biological role, f(1)F(0) ATP synthase produces ATP from ADP in the presence of a proton or sodium gradient. F-type ATPases consist of two structural domains, F(1) containing the extramembraneous catalytic core and F(0) containing the membrane proton channel, linked together by a central stalk and a peripheral stalk. During catalysis, ATP synthesis in the catalytic domain of F(1) is coupled via a rotary mechanism of the central stalk subunits to proton translocation. Functionally, component of the F(0) channel, it forms part of the peripheral stalk, linking F(1) to F(0). The b'-subunit is a diverged and duplicated form of b found in plants and photosynthetic bacteria. This chain is ATP synthase subunit b', found in Synechococcus sp. (strain PCC 6716).